The primary structure comprises 558 residues: Arginine--tRNA ligase (558 aa).

The 'HIGH' region signature appears at 119 to 129; the sequence is ANPNGPLHVGH.

This sequence belongs to the class-I aminoacyl-tRNA synthetase family.

The protein resides in the cytoplasm. The enzyme catalyses tRNA(Arg) + L-arginine + ATP = L-arginyl-tRNA(Arg) + AMP + diphosphate. The polypeptide is Arginine--tRNA ligase (Methanoregula boonei (strain DSM 21154 / JCM 14090 / 6A8)).